The primary structure comprises 263 residues: Endonuclease 8 (263 aa).

P2 functions as the Schiff-base intermediate with DNA in the catalytic mechanism. Catalysis depends on E3, which acts as the Proton donor. K53 serves as the catalytic Proton donor; for beta-elimination activity. Residues Q70, R125, and N169 each contribute to the DNA site. The segment at 229–263 (KVFHRDGELCERCGGIIEKTTLSSRPFYWCPGCQH) adopts an FPG-type zinc-finger fold. R253 serves as the catalytic Proton donor; for delta-elimination activity.

Belongs to the FPG family. It depends on Zn(2+) as a cofactor.

The catalysed reaction is 2'-deoxyribonucleotide-(2'-deoxyribose 5'-phosphate)-2'-deoxyribonucleotide-DNA = a 3'-end 2'-deoxyribonucleotide-(2,3-dehydro-2,3-deoxyribose 5'-phosphate)-DNA + a 5'-end 5'-phospho-2'-deoxyribonucleoside-DNA + H(+). Its function is as follows. Involved in base excision repair of DNA damaged by oxidation or by mutagenic agents. Acts as a DNA glycosylase that recognizes and removes damaged bases. Has a preference for oxidized pyrimidines, such as thymine glycol, 5,6-dihydrouracil and 5,6-dihydrothymine. Has AP (apurinic/apyrimidinic) lyase activity and introduces nicks in the DNA strand. Cleaves the DNA backbone by beta-delta elimination to generate a single-strand break at the site of the removed base with both 3'- and 5'-phosphates. The sequence is that of Endonuclease 8 from Escherichia coli O7:K1 (strain IAI39 / ExPEC).